The chain runs to 398 residues: Exodeoxyribonuclease 7 large subunit (398 aa).

This sequence belongs to the XseA family. In terms of assembly, heterooligomer composed of large and small subunits.

The protein localises to the cytoplasm. It catalyses the reaction Exonucleolytic cleavage in either 5'- to 3'- or 3'- to 5'-direction to yield nucleoside 5'-phosphates.. In terms of biological role, bidirectionally degrades single-stranded DNA into large acid-insoluble oligonucleotides, which are then degraded further into small acid-soluble oligonucleotides. The polypeptide is Exodeoxyribonuclease 7 large subunit (Salinibacter ruber (strain DSM 13855 / M31)).